Reading from the N-terminus, the 331-residue chain is GTP 3',8-cyclase (331 aa).

One can recognise a Radical SAM core domain in the interval 6–234 (PFNRKIDYLR…PATGKSHDGP (229 aa)). Position 15 (Arg-15) interacts with GTP. 2 residues coordinate [4Fe-4S] cluster: Cys-22 and Cys-26. Tyr-28 is a binding site for S-adenosyl-L-methionine. Cys-29 contributes to the [4Fe-4S] cluster binding site. Residue Arg-66 participates in GTP binding. Gly-70 is an S-adenosyl-L-methionine binding site. Position 97 (Ser-97) interacts with GTP. Residue Ser-121 coordinates S-adenosyl-L-methionine. Lys-158 contacts GTP. Met-192 lines the S-adenosyl-L-methionine pocket. The [4Fe-4S] cluster site is built by Cys-258 and Cys-261. Position 263–265 (263–265 (RVR)) interacts with GTP. Residue Cys-275 coordinates [4Fe-4S] cluster.

This sequence belongs to the radical SAM superfamily. MoaA family. In terms of assembly, monomer and homodimer. [4Fe-4S] cluster serves as cofactor.

It catalyses the reaction GTP + AH2 + S-adenosyl-L-methionine = (8S)-3',8-cyclo-7,8-dihydroguanosine 5'-triphosphate + 5'-deoxyadenosine + L-methionine + A + H(+). It functions in the pathway cofactor biosynthesis; molybdopterin biosynthesis. Catalyzes the cyclization of GTP to (8S)-3',8-cyclo-7,8-dihydroguanosine 5'-triphosphate. This Hydrogenovibrio crunogenus (strain DSM 25203 / XCL-2) (Thiomicrospira crunogena) protein is GTP 3',8-cyclase.